We begin with the raw amino-acid sequence, 361 residues long: Probable cysteine protease RD19B (361 aa).

The first 24 residues, 1–24, serve as a signal peptide directing secretion; that stretch reads MDYHLRVLFSVSLIFVFVSVSVCG. Positions 25–131 are cleaved as a propeptide — activation peptide; that stretch reads DEDVLIRQVV…NQAPILPTQN (107 aa). 2 disulfides stabilise this stretch: Cys-153–Cys-203 and Cys-187–Cys-237. Cys-156 is a catalytic residue. Residue Asn-250 is glycosylated (N-linked (GlcNAc...) asparagine). Cysteines 293 and 347 form a disulfide. Catalysis depends on residues His-299 and Asn-326.

This sequence belongs to the peptidase C1 family.

Its subcellular location is the lytic vacuole. Its function is as follows. Probable thiol protease. In Arabidopsis thaliana (Mouse-ear cress), this protein is Probable cysteine protease RD19B.